Reading from the N-terminus, the 122-residue chain is Holo-[acyl-carrier-protein] synthase (122 aa).

Residues D8 and E56 each coordinate Mg(2+).

The protein belongs to the P-Pant transferase superfamily. AcpS family. Mg(2+) is required as a cofactor.

The protein resides in the cytoplasm. It catalyses the reaction apo-[ACP] + CoA = holo-[ACP] + adenosine 3',5'-bisphosphate + H(+). Functionally, transfers the 4'-phosphopantetheine moiety from coenzyme A to a Ser of acyl-carrier-protein. The polypeptide is Holo-[acyl-carrier-protein] synthase (Streptomyces griseus subsp. griseus (strain JCM 4626 / CBS 651.72 / NBRC 13350 / KCC S-0626 / ISP 5235)).